The following is an 88-amino-acid chain: MATSRLPPATLTLKQFMRRQQVLLLYRRILQAIRQVPNDSDRKYLKDWAREEFKRNKSATEEDTIRMMITQGNMQLKELEKTLALARS.

The N-terminal 19 residues, 1 to 19, are a transit peptide targeting the mitochondrion; that stretch reads MATSRLPPATLTLKQFMRR.

This sequence belongs to the complex I LYR family.

It localises to the mitochondrion. In terms of biological role, involved in efficient integration of the N-module into mitochondrial respiratory chain complex I. This Bos taurus (Bovine) protein is LYR motif-containing protein 2 (LYRM2).